The sequence spans 374 residues: Ribosomal RNA large subunit methyltransferase G (374 aa).

It belongs to the methyltransferase superfamily. RlmG family.

It localises to the cytoplasm. It catalyses the reaction guanosine(1835) in 23S rRNA + S-adenosyl-L-methionine = N(2)-methylguanosine(1835) in 23S rRNA + S-adenosyl-L-homocysteine + H(+). Its function is as follows. Specifically methylates the guanine in position 1835 (m2G1835) of 23S rRNA. The sequence is that of Ribosomal RNA large subunit methyltransferase G from Pseudomonas entomophila (strain L48).